A 1165-amino-acid polypeptide reads, in one-letter code: Autophagy-related protein 11 (1165 aa).

Coiled-coil stretches lie at residues 239–304 (NKLN…YKNM) and 670–853 (DNIR…KQKK).

It belongs to the ATG11 family. Homodimer and potential homooligomers.

It localises to the preautophagosomal structure membrane. Its function is as follows. Plays an essential role in both non-selective and selective autophagy such as mitophagy. Recruits mitochondria for their selective degradation via autophagy (mitophagy) during starvation, through its interaction with ATG32. Works as scaffold proteins that recruit ATG proteins to the pre-autophagosome (PAS), the site of vesicle/autophagosome formation. Required for ATG9 anterograde transport from the mitochondria to the PAS. The protein is Autophagy-related protein 11 of Candida albicans (strain SC5314 / ATCC MYA-2876) (Yeast).